An 88-amino-acid polypeptide reads, in one-letter code: Large ribosomal subunit protein bL27 (88 aa).

Residues Met1 to Lys24 form a disordered region.

This sequence belongs to the bacterial ribosomal protein bL27 family.

This Ehrlichia canis (strain Jake) protein is Large ribosomal subunit protein bL27.